We begin with the raw amino-acid sequence, 116 residues long: Neuropeptide Y receptor type 1 (116 aa).

Residues 1–6 (LVLIAV) traverse the membrane as a helical segment. Residues 7–24 (ERHQLIINPRGWRPSNRH) lie on the Cytoplasmic side of the membrane. The chain crosses the membrane as a helical span at residues 25–45 (AYVGIAVIWVLAVASSLPFLI). The Extracellular segment spans residues 46-81 (YQVLTDEPFQNVTLDAFKDKYVCFDKFPSDSHRLSY). Asn56 carries an N-linked (GlcNAc...) asparagine glycan. Residues 82-102 (TTLLLVLQYFGPLCFIFICYF) form a helical membrane-spanning segment. At 103–116 (KIYIRLKRRNNMMD) the chain is on the cytoplasmic side.

Belongs to the G-protein coupled receptor 1 family.

It localises to the cell membrane. In terms of biological role, receptor for neuropeptide Y and peptide YY. This is Neuropeptide Y receptor type 1 (NPY1R) from Ovis aries (Sheep).